The sequence spans 126 residues: uncharacterized protein (126 aa).

This is an uncharacterized protein from Saccharomyces cerevisiae (strain ATCC 204508 / S288c) (Baker's yeast).